We begin with the raw amino-acid sequence, 523 residues long: GMP synthase [glutamine-hydrolyzing] (523 aa).

In terms of domain architecture, Glutamine amidotransferase type-1 spans 8-205 (KILILDFGSQ…VVDICGCETN (198 aa)). C85 serves as the catalytic Nucleophile. Residues H179 and E181 contribute to the active site. In terms of domain architecture, GMPS ATP-PPase spans 206–398 (WTAENIIEDA…LGLPAEMLNR (193 aa)). 233–239 (SGGVDSS) serves as a coordination point for ATP.

In terms of assembly, homodimer.

The enzyme catalyses XMP + L-glutamine + ATP + H2O = GMP + L-glutamate + AMP + diphosphate + 2 H(+). The protein operates within purine metabolism; GMP biosynthesis; GMP from XMP (L-Gln route): step 1/1. Its function is as follows. Catalyzes the synthesis of GMP from XMP. This chain is GMP synthase [glutamine-hydrolyzing], found in Histophilus somni (strain 129Pt) (Haemophilus somnus).